A 165-amino-acid chain; its full sequence is V-type proton ATPase 16 kDa proteolipid subunit (165 aa).

Residues 1–12 (MSTVFNGDETAP) lie on the Lumenal side of the membrane. Residues 13-33 (FFGFLGAAAALVFSCMGAAYG) form a helical membrane-spanning segment. The Cytoplasmic segment spans residues 34–55 (TAKSGVGVASMGVMRPELVMKS). Residues 56–76 (IVPVVMAGVLGIYGLIIAVII) traverse the membrane as a helical segment. At 77–95 (STGINPKAKSYYLFDGYAH) the chain is on the lumenal side. Residues 96–117 (LSSGLACGLAGLSAGMAIGIVG) form a helical membrane-spanning segment. The Cytoplasmic segment spans residues 118–129 (DAGVRANAQQPK). Residues 130–155 (LFVGMILILIFAEALALYGLIVGIIL) traverse the membrane as a helical segment. Over 156–165 (SSRAGQSRAD) the chain is Lumenal.

The protein belongs to the V-ATPase proteolipid subunit family. As to quaternary structure, V-ATPase is a heteromultimeric enzyme composed of a peripheral catalytic V1 complex (main components: subunits A, B, C, D, E, and F) attached to an integral membrane V0 proton pore complex (main component: the proteolipid protein; which is present as a hexamer that forms the proton-conducting pore).

Its subcellular location is the vacuole membrane. Functionally, proton-conducting pore forming subunit of the membrane integral V0 complex of vacuolar ATPase. V-ATPase is responsible for acidifying a variety of intracellular compartments in eukaryotic cells. In Mesembryanthemum crystallinum (Common ice plant), this protein is V-type proton ATPase 16 kDa proteolipid subunit (VMAC1).